The primary structure comprises 287 residues: 3-beta-hydroxysteroid sulfotransferase (287 aa).

44 to 49 (KSGTNW) serves as a coordination point for 3'-phosphoadenylyl sulfate. Substrate contacts are provided by W72 and W77. H99 serves as the catalytic Proton acceptor. Residues R121, S129, Y184, 218 to 223 (SSFKFM), and 247 to 249 (RKG) contribute to the 3'-phosphoadenylyl sulfate site.

It belongs to the sulfotransferase 1 family. As to quaternary structure, homodimer. As to expression, liver, intestine and kidney.

The protein resides in the cytoplasm. It carries out the reaction an alcohol + 3'-phosphoadenylyl sulfate = an alkyl sulfate + adenosine 3',5'-bisphosphate + H(+). In terms of biological role, sulfotransferase that utilizes 3'-phospho-5'-adenylyl sulfate (PAPS) as sulfonate donor to catalyze the sulfonation of 3-beta-hydroxyl groups of neutral steroids. High preference for C21 steroid (pregnenolone). The sequence is that of 3-beta-hydroxysteroid sulfotransferase (STD2) from Cavia porcellus (Guinea pig).